A 325-amino-acid polypeptide reads, in one-letter code: GMP reductase (325 aa).

Cys174 functions as the Thioimidate intermediate in the catalytic mechanism. 203–226 contacts NADP(+); the sequence is LIADGGIRTHGDIAKSIRFGASMV.

Belongs to the IMPDH/GMPR family. GuaC type 2 subfamily.

The enzyme catalyses IMP + NH4(+) + NADP(+) = GMP + NADPH + 2 H(+). Catalyzes the irreversible NADPH-dependent deamination of GMP to IMP. It functions in the conversion of nucleobase, nucleoside and nucleotide derivatives of G to A nucleotides, and in maintaining the intracellular balance of A and G nucleotides. The chain is GMP reductase from Staphylococcus aureus (strain MRSA252).